The following is a 330-amino-acid chain: Lymphocyte-specific protein 1 (330 aa).

Basic and acidic residues-rich tracts occupy residues 1–20 (MAEA…HAED) and 37–62 (AREQ…DGGH). Disordered regions lie at residues 1-246 (MAEA…SIEL) and 281-302 (DMSK…TIKS). The span at 66 to 77 (QPGQQTLISLKS) shows a compositional bias: polar residues. Residues Ser-77 and Ser-78 each carry the phosphoserine; by CK2 modification. Over residues 113–135 (QSERPEEKQTEESSHQAKVHLEE) the composition is skewed to basic and acidic residues. Thr-166 is subject to Phosphothreonine. Ser-168, Ser-179, Ser-180, and Ser-184 each carry phosphoserine. 2 stretches are compositionally biased toward polar residues: residues 206–215 (VKKSQPTLPI) and 223–242 (QQYT…SRQP). A Phosphoserine; by MAPKAPK2 modification is found at Ser-243. Positions 291–302 (KGGSKISSTIKS) are enriched in low complexity. Lys-318 bears the N6-acetyllysine mark.

Phosphorylated by casein kinase II, protein kinase C and MAPKAPK2. Phosphorylation by PKC induces translocation from membrane to cytoplasm. Phosphorylation by MAPKAPK2 may regulate neutrophil chemotaxis. Isoform 1 is expressed in normal mouse B and T-lymphocytes and in transformed B-cells but not (or in smaller amounts) in nine T-lymphoma lines tested. Isoform 2 is expressed in non-lymphoid cell lines (myocytes, stromal cells, fibroblasts).

It localises to the cell membrane. Functionally, may play a role in mediating neutrophil activation and chemotaxis. The protein is Lymphocyte-specific protein 1 (Lsp1) of Mus musculus (Mouse).